The primary structure comprises 440 residues: NADH-quinone oxidoreductase subunit H (440 aa).

A run of 9 helical transmembrane segments spans residues 11–31 (VWLI…WTIF), 83–103 (IVFN…WSVI), 123–143 (VPVA…GVVL), 164–184 (MISY…FSGS), 207–227 (IAGH…ITMF), 261–281 (FLAE…LFLG), 299–319 (WWGL…FVWV), 331–351 (FMDL…LLVA), and 366–386 (VFLV…FMGG).

It belongs to the complex I subunit 1 family. In terms of assembly, NDH-1 is composed of 14 different subunits. Subunits NuoA, H, J, K, L, M, N constitute the membrane sector of the complex.

It localises to the cell membrane. The catalysed reaction is a quinone + NADH + 5 H(+)(in) = a quinol + NAD(+) + 4 H(+)(out). Functionally, NDH-1 shuttles electrons from NADH, via FMN and iron-sulfur (Fe-S) centers, to quinones in the respiratory chain. The immediate electron acceptor for the enzyme in this species is believed to be ubiquinone. Couples the redox reaction to proton translocation (for every two electrons transferred, four hydrogen ions are translocated across the cytoplasmic membrane), and thus conserves the redox energy in a proton gradient. This subunit may bind ubiquinone. The sequence is that of NADH-quinone oxidoreductase subunit H from Cutibacterium acnes (strain DSM 16379 / KPA171202) (Propionibacterium acnes).